A 389-amino-acid chain; its full sequence is S-adenosylmethionine synthase (389 aa).

Residue His17 participates in ATP binding. Residue Asp19 coordinates Mg(2+). Glu45 lines the K(+) pocket. The L-methionine site is built by Glu58 and Gln102. Residues 102–112 (QSADIAQGVDA) are flexible loop. ATP-binding positions include 167-169 (DAK), Asp241, 247-248 (RK), Ala264, and Lys268. Asp241 lines the L-methionine pocket. Lys272 is an L-methionine binding site.

It belongs to the AdoMet synthase family. As to quaternary structure, homotetramer; dimer of dimers. Mg(2+) serves as cofactor. K(+) is required as a cofactor.

Its subcellular location is the cytoplasm. It catalyses the reaction L-methionine + ATP + H2O = S-adenosyl-L-methionine + phosphate + diphosphate. It functions in the pathway amino-acid biosynthesis; S-adenosyl-L-methionine biosynthesis; S-adenosyl-L-methionine from L-methionine: step 1/1. Its function is as follows. Catalyzes the formation of S-adenosylmethionine (AdoMet) from methionine and ATP. The overall synthetic reaction is composed of two sequential steps, AdoMet formation and the subsequent tripolyphosphate hydrolysis which occurs prior to release of AdoMet from the enzyme. This is S-adenosylmethionine synthase from Parvibaculum lavamentivorans (strain DS-1 / DSM 13023 / NCIMB 13966).